Reading from the N-terminus, the 971-residue chain is Oncostatin-M-specific receptor subunit beta (971 aa).

An N-terminal signal peptide occupies residues 1 to 23 (MAFSVVLHPAFLLAVLSLRASRS). Topologically, residues 24 to 737 (EVLEEPLPLT…VTTPDARSHM (714 aa)) are extracellular. N74, N97, N130, N162, and N239 each carry an N-linked (GlcNAc...) asparagine glycan. A disulfide bridge connects residues C242 and C252. N-linked (GlcNAc...) asparagine glycans are attached at residues N271, N304, N323, and N377. Fibronectin type-III domains follow at residues 332 to 425 (APQD…TPET), 427 to 523 (PSQA…SNDS), 524 to 620 (GHEE…TQEL), and 622 to 733 (PLVN…TPDA). The WSXWS motif signature appears at 412 to 416 (WSDWT). N-linked (GlcNAc...) asparagine glycosylation is found at N491, N541, N577, N689, and N722. Residues 738 to 758 (LLQIILPMTLCVLLSIIVCYW) form a helical membrane-spanning segment. Residues 759–971 (KSQWVKEKCY…STVLLGQGEQ (213 aa)) are Cytoplasmic-facing. Positions 767–775 (CYPDIPNPY) match the Box 1 motif motif. The disordered stretch occupies residues 949–971 (LASPSLKEDNSLTSTVLLGQGEQ). The span at 959–971 (SLTSTVLLGQGEQ) shows a compositional bias: polar residues.

This sequence belongs to the type I cytokine receptor family. Type 2 subfamily. In terms of assembly, heterodimer composed of OSMR and IL6ST (type II OSM receptor). Heterodimer with IL31RA to form the IL31 receptor. In terms of tissue distribution, widely expressed. Expressed at highest levels in the lung, heart, thymus and spleen. Expressed in dorsal root ganglia.

The protein resides in the membrane. In terms of biological role, associates with IL31RA to form the IL31 receptor. Binds IL31 to activate STAT3 and possibly STAT1 and STAT5. Capable of transducing OSM-specific signaling events. This chain is Oncostatin-M-specific receptor subunit beta (Osmr), found in Mus musculus (Mouse).